Reading from the N-terminus, the 177-residue chain is Thymidine kinase (177 aa).

11 to 18 (GPMFSGKS) provides a ligand contact to ATP. Glu83 functions as the Proton acceptor in the catalytic mechanism. Position 113 (Phe113) interacts with substrate. Residues Cys138 and Cys141 each coordinate Zn(2+). 157 to 161 (IEIIG) serves as a coordination point for substrate. Zn(2+) is bound by residues Cys170 and Cys173.

It belongs to the thymidine kinase family. Homotetramer. Two molecules of substrate bind to each enzyme tetramer.

It catalyses the reaction thymidine + ATP = dTMP + ADP + H(+). Functionally, phosphorylates thymidine and thymidine analogs, such as azidothymidine (AZT). Part of the salvage pathway for pyrimidine deoxyribonucleotide synthesis. This is Thymidine kinase (OPG101) from Cynomys gunnisoni (Gunnison's prairie dog).